The following is a 393-amino-acid chain: Phosphoglycerate kinase (393 aa).

Substrate is bound by residues 21 to 23 (DLN), Arg-36, 59 to 62 (HLGR), Arg-114, and Arg-147. Residues Lys-198, Glu-314, and 340 to 343 (GGDT) contribute to the ATP site.

It belongs to the phosphoglycerate kinase family. Monomer.

Its subcellular location is the cytoplasm. It carries out the reaction (2R)-3-phosphoglycerate + ATP = (2R)-3-phospho-glyceroyl phosphate + ADP. Its pathway is carbohydrate degradation; glycolysis; pyruvate from D-glyceraldehyde 3-phosphate: step 2/5. The polypeptide is Phosphoglycerate kinase (Buchnera aphidicola subsp. Baizongia pistaciae (strain Bp)).